Here is a 438-residue protein sequence, read N- to C-terminus: Na(+)/H(+) antiporter NhaA (438 aa).

11 helical membrane passes run Phe23 to Leu43, Phe62 to Leu82, Ser104 to Leu124, Gly133 to Gly153, Val162 to Phe182, Thr185 to Leu205, Val221 to Leu241, Phe302 to Val322, Leu337 to Ile357, Trp372 to Ile392, and Ile410 to Leu430.

It belongs to the NhaA Na(+)/H(+) (TC 2.A.33) antiporter family.

Its subcellular location is the cell inner membrane. It catalyses the reaction Na(+)(in) + 2 H(+)(out) = Na(+)(out) + 2 H(+)(in). In terms of biological role, na(+)/H(+) antiporter that extrudes sodium in exchange for external protons. In Helicobacter pylori (strain HPAG1), this protein is Na(+)/H(+) antiporter NhaA.